The sequence spans 388 residues: 3-sulfinopropanoyl-CoA desulfinase (388 aa).

FAD contacts are provided by residues 121–124 (ICIT), Ser130, and 153–156 (HWIT). 240–241 (YN) contributes to the substrate binding site. FAD is bound by residues Arg269, Gln336, 363–367 (GGTAQ), and Gln384.

It belongs to the acyl-CoA dehydrogenase family. As to quaternary structure, homotrimer or homotetramer. FAD is required as a cofactor.

It catalyses the reaction 3-sulfinopropanoyl-CoA + H2O = propanoyl-CoA + sulfite + H(+). In terms of biological role, catalyzes the conversion 3-sulfinopropanoyl-CoA (3SP-CoA) to propanoyl-CoA by abstraction of sulfite. Does not show dehydrogenase activity. This is 3-sulfinopropanoyl-CoA desulfinase from Paraburkholderia xenovorans (strain LB400).